The sequence spans 324 residues: Beta-ketoacyl-[acyl-carrier-protein] synthase III (324 aa).

Active-site residues include C114 and H251. Residues 252 to 256 are ACP-binding; the sequence is QANRR. Residue N281 is part of the active site.

Belongs to the thiolase-like superfamily. FabH family. Homodimer.

The protein resides in the cytoplasm. It catalyses the reaction malonyl-[ACP] + acetyl-CoA + H(+) = 3-oxobutanoyl-[ACP] + CO2 + CoA. The protein operates within lipid metabolism; fatty acid biosynthesis. In terms of biological role, catalyzes the condensation reaction of fatty acid synthesis by the addition to an acyl acceptor of two carbons from malonyl-ACP. Catalyzes the first condensation reaction which initiates fatty acid synthesis and may therefore play a role in governing the total rate of fatty acid production. Possesses both acetoacetyl-ACP synthase and acetyl transacylase activities. Its substrate specificity determines the biosynthesis of branched-chain and/or straight-chain of fatty acids. The polypeptide is Beta-ketoacyl-[acyl-carrier-protein] synthase III (Paramagnetospirillum magneticum (strain ATCC 700264 / AMB-1) (Magnetospirillum magneticum)).